The primary structure comprises 125 residues: Large ribosomal subunit protein bL12 (125 aa).

It belongs to the bacterial ribosomal protein bL12 family. As to quaternary structure, homodimer. Part of the ribosomal stalk of the 50S ribosomal subunit. Forms a multimeric L10(L12)X complex, where L10 forms an elongated spine to which 2 to 4 L12 dimers bind in a sequential fashion. Binds GTP-bound translation factors.

Its function is as follows. Forms part of the ribosomal stalk which helps the ribosome interact with GTP-bound translation factors. Is thus essential for accurate translation. This Polaromonas naphthalenivorans (strain CJ2) protein is Large ribosomal subunit protein bL12.